Reading from the N-terminus, the 193-residue chain is Acyl-homoserine-lactone synthase (193 aa).

The protein belongs to the autoinducer synthase family.

The catalysed reaction is a fatty acyl-[ACP] + S-adenosyl-L-methionine = an N-acyl-L-homoserine lactone + S-methyl-5'-thioadenosine + holo-[ACP] + H(+). In terms of biological role, required for the synthesis of N-(3-oxodecanoyl)-L-homoserine lactone (ODHL), an autoinducer molecule which binds to VanR. The polypeptide is Acyl-homoserine-lactone synthase (vanI) (Vibrio anguillarum (Listonella anguillarum)).